We begin with the raw amino-acid sequence, 191 residues long: Shikimate kinase (191 aa).

14 to 19 (GSGKST) is a binding site for ATP. Residue serine 18 participates in Mg(2+) binding. The substrate site is built by aspartate 36, arginine 60, and glycine 82. Arginine 120 is an ATP binding site. Arginine 147 provides a ligand contact to substrate.

It belongs to the shikimate kinase family. As to quaternary structure, monomer. The cofactor is Mg(2+).

It is found in the cytoplasm. The enzyme catalyses shikimate + ATP = 3-phosphoshikimate + ADP + H(+). It participates in metabolic intermediate biosynthesis; chorismate biosynthesis; chorismate from D-erythrose 4-phosphate and phosphoenolpyruvate: step 5/7. In terms of biological role, catalyzes the specific phosphorylation of the 3-hydroxyl group of shikimic acid using ATP as a cosubstrate. The polypeptide is Shikimate kinase (Chlorobaculum tepidum (strain ATCC 49652 / DSM 12025 / NBRC 103806 / TLS) (Chlorobium tepidum)).